We begin with the raw amino-acid sequence, 347 residues long: Rhodopsin (347 aa).

At 1-33 (TEGPDFYIPMVNTTGVVRSPYEYPQYYLVNPAA) the chain is on the extracellular side. The N-linked (GlcNAc...) asparagine glycan is linked to asparagine 12. A helical transmembrane segment spans residues 34-58 (YAVLGAYMFFLIIVGFPINFLTLYV). Residues 59 to 70 (TLEHKKLRTPLN) lie on the Cytoplasmic side of the membrane. A helical membrane pass occupies residues 71-93 (YILLNLAVADLFMVIGGFTTTMY). At 94-107 (SSMHGYFVLGRLGC) the chain is on the extracellular side. Residues cysteine 107 and cysteine 184 are joined by a disulfide bond. The chain crosses the membrane as a helical span at residues 108-130 (NIEGFFATLGGMISLWSLAVLAI). The short motif at 131–133 (ERW) is the 'Ionic lock' involved in activated form stabilization element. Topologically, residues 131–149 (ERWVVVCKPISNFRFGENH) are cytoplasmic. A helical membrane pass occupies residues 150–170 (AIMGVSLTWVMALACTVPPLV). Topologically, residues 171–199 (GWSRYIPEGMQCACGIDYYTRAEGYNNES) are extracellular. A glycan (N-linked (GlcNAc...) asparagine) is linked at asparagine 197. The chain crosses the membrane as a helical span at residues 200–221 (FVIYMFTFHFLFPMFIIFFCYG). Topologically, residues 222-249 (RLLCAVKEAAAAQQESETTQRAEREVTR) are cytoplasmic. A helical transmembrane segment spans residues 250-271 (MVILMVIGYLVCWLPYASVAWF). Residues 272-283 (IFTHKGSEFGPL) are Extracellular-facing. Residues 284–305 (FMAVPSFFAKSSSIYNPIIYIC) traverse the membrane as a helical segment. Lysine 293 carries the post-translational modification N6-(retinylidene)lysine. Over 306–347 (MNKQFRQCMITTLFCGKNPFEGQEEDSSTKTEASSASSVSPA) the chain is Cytoplasmic. The S-palmitoyl cysteine moiety is linked to residue cysteine 320. The segment at 326-347 (EGQEEDSSTKTEASSASSVSPA) is disordered. The span at 335 to 347 (KTEASSASSVSPA) shows a compositional bias: low complexity.

The protein belongs to the G-protein coupled receptor 1 family. Opsin subfamily. Phosphorylated on some or all of the serine and threonine residues present in the C-terminal region. In terms of processing, contains one covalently linked retinal chromophore.

The protein resides in the membrane. It localises to the cell projection. Its subcellular location is the cilium. It is found in the photoreceptor outer segment. Its function is as follows. Photoreceptor required for image-forming vision at low light intensity. While most salt water fish species use retinal as chromophore, most freshwater fish use 3-dehydroretinal, or a mixture of retinal and 3-dehydroretinal. Light-induced isomerization of 11-cis to all-trans retinal triggers a conformational change that activates signaling via G-proteins. Subsequent receptor phosphorylation mediates displacement of the bound G-protein alpha subunit by arrestin and terminates signaling. This is Rhodopsin (rho) from Sargocentron spiniferum (Sabre squirrelfish).